We begin with the raw amino-acid sequence, 225 residues long: C-reactive protein (225 aa).

An N-terminal signal peptide occupies residues 1-19 (MEKLLWCSLVMIGFSQAFA). At Gln-20 the chain carries Pyrrolidone carboxylic acid. In terms of domain architecture, Pentraxin (PTX) spans 24-225 (SKTAFVFPKE…DVFIKPQLWP (202 aa)). A disulfide bridge connects residues Cys-55 and Cys-116. Residues Asn-80, Glu-157, Gln-158, Asp-159, and Gln-169 each contribute to the Ca(2+) site.

The protein belongs to the pentraxin family. As to quaternary structure, homopentamer. Pentraxin (or pentaxin) have a discoid arrangement of 5 non-covalently bound subunits. Interacts with FCN1; may regulate monocyte activation by FCN1. The cofactor is Ca(2+). In terms of tissue distribution, found in plasma.

The protein resides in the secreted. Its function is as follows. Displays several functions associated with host defense: it promotes agglutination, bacterial capsular swelling, phagocytosis and complement fixation through its calcium-dependent binding to phosphorylcholine. Can interact with DNA and histones and may scavenge nuclear material released from damaged circulating cells. This is C-reactive protein (CRP) from Mesocricetus auratus (Golden hamster).